The chain runs to 508 residues: UTP--glucose-1-phosphate uridylyltransferase (508 aa).

Phosphoserine is present on serine 13. UTP-binding positions include 113–116, lysine 127, glutamine 190, and glycine 222; that span reads LNGG. 115–116 contributes to the substrate binding site; it reads GG. Residue lysine 127 coordinates Mg(2+). Residues histidine 223 and 251 to 253 each bind substrate; that span reads NID. Residues aspartate 253 and lysine 396 each contribute to the UTP site. Position 253 (aspartate 253) interacts with Mg(2+). Lysine 396 is an active-site residue. Position 426 is a phosphothreonine (threonine 426). Residue serine 434 is modified to Phosphoserine. N6-acetyllysine is present on lysine 438. Residues serine 448 and serine 461 each carry the phosphoserine modification. The tract at residues 457–508 is oligomerization; it reads HLTVSGDVTFGKNVSLKGTVIIIXNHGDRIDIPPGAVLENKIVSGNLRILDH. A critical for end-to-end subunit interaction region spans residues 502–503; that stretch reads NL.

It belongs to the UDPGP type 1 family. As to quaternary structure, homooctamer.

It is found in the cytoplasm. The enzyme catalyses alpha-D-glucose 1-phosphate + UTP + H(+) = UDP-alpha-D-glucose + diphosphate. Its pathway is glycan biosynthesis; glycogen biosynthesis. UTP--glucose-1-phosphate uridylyltransferase catalyzing the conversion of glucose-1-phosphate into UDP-glucose, a crucial precursor for the production of glycogen. The chain is UTP--glucose-1-phosphate uridylyltransferase (UGP2) from Sus scrofa (Pig).